The sequence spans 388 residues: (S)-8-oxocitronellyl enol synthase ISY1 (388 aa).

Residues 35–37, 63–64, 81–82, 105–106, and Gln-143 each bind NADP(+); these read TGI, RR, DV, and TW. Active-site residues include Lys-147 and Tyr-178. NADP(+) is bound by residues Tyr-178, Ile-205, and 212 to 214; that span reads SMM.

It belongs to the short-chain dehydrogenases/reductases (SDR) family.

It carries out the reaction (S)-8-oxocitronellyl enol + NADP(+) = (6E)-8-oxogeranial + NADPH + H(+). The catalysed reaction is (S)-8-oxocitronellyl enol + NAD(+) = (6E)-8-oxogeranial + NADH + H(+). Its function is as follows. Iridoid synthase that catalyzes the first step in generation of the iridoid ring scaffold using the linear monoterpene (6E)-8-oxogeranial as substrate. Iridoids comprise a large family of distinctive bicyclic monoterpenes that possess a wide range of pharmacological activities, including anticancer, anti-inflammatory, antifungal and antibacterial activities. Catalyzes the conversion of the linear monoterpene (6E)-8-oxogeranial to (S)-8-oxocitronellyl enol, a precursor of nepetalactones, which are metabolites that are both insect-repellent and have euphoric effect in cats. This Nepeta racemosa (Catmint) protein is (S)-8-oxocitronellyl enol synthase ISY1.